Consider the following 214-residue polypeptide: Large ribosomal subunit protein uL16 (214 aa).

Residue R32 is modified to Citrulline. Residue K175 forms a Glycyl lysine isopeptide (Lys-Gly) (interchain with G-Cter in SUMO2) linkage. Residue K188 forms a Glycyl lysine isopeptide (Lys-Gly) (interchain with G-Cter in ubiquitin) linkage.

Belongs to the universal ribosomal protein uL16 family. Component of the large ribosomal subunit. Mature ribosomes consist of a small (40S) and a large (60S) subunit. The 40S subunit contains about 33 different proteins and 1 molecule of RNA (18S). The 60S subunit contains about 49 different proteins and 3 molecules of RNA (28S, 5.8S and 5S). In terms of processing, citrullinated by PADI4. Ufmylated by UFL1.

It is found in the cytoplasm. In terms of biological role, component of the large ribosomal subunit. Plays a role in the formation of actively translating ribosomes. May play a role in the embryonic brain development. The protein is Large ribosomal subunit protein uL16 of Rattus norvegicus (Rat).